A 180-amino-acid polypeptide reads, in one-letter code: ATP-dependent protease subunit HslV (180 aa).

T5 is a catalytic residue. G161, C164, and T167 together coordinate Na(+).

The protein belongs to the peptidase T1B family. HslV subfamily. As to quaternary structure, a double ring-shaped homohexamer of HslV is capped on each side by a ring-shaped HslU homohexamer. The assembly of the HslU/HslV complex is dependent on binding of ATP.

The protein localises to the cytoplasm. It carries out the reaction ATP-dependent cleavage of peptide bonds with broad specificity.. Its activity is regulated as follows. Allosterically activated by HslU binding. In terms of biological role, protease subunit of a proteasome-like degradation complex believed to be a general protein degrading machinery. The chain is ATP-dependent protease subunit HslV from Campylobacter jejuni subsp. doylei (strain ATCC BAA-1458 / RM4099 / 269.97).